The chain runs to 308 residues: Putative integrase/recombinase y4qK (308 aa).

Residues 15 to 97 (LVMTPLRQRM…ALRFFFSVTL (83 aa)) enclose the Core-binding (CB) domain. Residues 115–288 (KLPIILSPDE…ATNKVCATSS (174 aa)) enclose the Tyr recombinase domain. Catalysis depends on residues Arg-150, Lys-175, His-240, Arg-243, and His-266. Tyr-275 functions as the O-(3'-phospho-DNA)-tyrosine intermediate in the catalytic mechanism.

This sequence belongs to the 'phage' integrase family.

May function as an integrase. The sequence is that of Putative integrase/recombinase y4qK from Sinorhizobium fredii (strain NBRC 101917 / NGR234).